The sequence spans 835 residues: Probable alpha-glucuronidase A (835 aa).

Residues 1–18 (MRWSFLTVLLWLVSLTGA) form the signal peptide. N-linked (GlcNAc...) asparagine glycans are attached at residues Asn-49, Asn-101, Asn-148, Asn-221, Asn-278, Asn-309, Asn-342, Asn-460, Asn-522, Asn-571, Asn-677, and Asn-727.

The protein belongs to the glycosyl hydrolase 67 family.

It localises to the secreted. The catalysed reaction is an alpha-D-glucuronoside + H2O = D-glucuronate + an alcohol. In terms of biological role, alpha-glucuronidase involved in the hydrolysis of xylan, a major structural heterogeneous polysaccharide found in plant biomass representing the second most abundant polysaccharide in the biosphere, after cellulose. Releases 4-O-methylglucuronic acid from xylan. In Aspergillus oryzae (strain ATCC 42149 / RIB 40) (Yellow koji mold), this protein is Probable alpha-glucuronidase A (aguA).